The sequence spans 379 residues: SUN domain-containing protein 5 (379 aa).

Positions 1–45 (MPRSSRSPGDPGALLEDVAHNPRPRRIAQRGRNTSRMAEDTSPNM) are disordered. The Nuclear segment spans residues 1-105 (MPRSSRSPGD…LLCQKLMEKT (105 aa)). The span at 31 to 45 (GRNTSRMAEDTSPNM) shows a compositional bias: polar residues. A helical membrane pass occupies residues 106–122 (GILLLCAFGFWMFSIHL). Residues 123–379 (PSKMKVWQDD…PHQNPYPKRD (257 aa)) are Perinuclear space-facing. The stretch at 141–182 (LRLYQEKVRHHSGEIQDLRGSMNQLIAKLQEMEAMSDEQKMA) forms a coiled coil. Residues 205–364 (GASIDFEHTS…YRVRVHGSVA (160 aa)) enclose the SUN domain.

In terms of assembly, probable homotrimer. Interacts with DNAJB13. Post-translationally, highly glycosylated in the Golgi apparatus during spermiogenesis. In terms of tissue distribution, sperm (at protein level). Widely expressed. Conflictingly shown to be specifically expressed in testis.

Its subcellular location is the nucleus inner membrane. It localises to the golgi apparatus. Its function is as follows. Plays an essential role in anchoring sperm head to the tail. Is responsible for the attachment of the coupling apparatus to the sperm nuclear envelope. In Homo sapiens (Human), this protein is SUN domain-containing protein 5 (SUN5).